Here is a 321-residue protein sequence, read N- to C-terminus: MLNLKVIYFGTPQFAATVLEDLLHHDVNVIGVVTRVDKPQKRSSQPIPSPVKTLALSKNIPLLQPEKASDPQFIEQLKAFEADVFIVVAYGAILRQVVLNIPKYGCYNLHAGLLPAYRGAAPIQRCIMDGVTQSGNTVIRMDAGMDTGDIAGVSYVPVGPDMTAGELAEALSAQGGEILIKTLQQISDGTISHTPQDSSKASIAPKLSKEEGFVLWNHPAEKVYAQIRGVTPAPGAWTLYSYQDKPAKRLVIRKASLASNKGIYGNPGDVIVSDQQELLIACAEGAICLKEIQPEGKGAMDSKTFLNGHSNHKLKLSFQNN.

112-115 (GLLP) is a (6S)-5,6,7,8-tetrahydrofolate binding site.

The protein belongs to the Fmt family.

It carries out the reaction L-methionyl-tRNA(fMet) + (6R)-10-formyltetrahydrofolate = N-formyl-L-methionyl-tRNA(fMet) + (6S)-5,6,7,8-tetrahydrofolate + H(+). In terms of biological role, attaches a formyl group to the free amino group of methionyl-tRNA(fMet). The formyl group appears to play a dual role in the initiator identity of N-formylmethionyl-tRNA by promoting its recognition by IF2 and preventing the misappropriation of this tRNA by the elongation apparatus. This is Methionyl-tRNA formyltransferase from Chlamydia caviae (strain ATCC VR-813 / DSM 19441 / 03DC25 / GPIC) (Chlamydophila caviae).